A 283-amino-acid chain; its full sequence is Nucleotide-binding protein THEYE_A0235 (283 aa).

ATP is bound at residue 12 to 19; that stretch reads GLSGGGKT. 62–65 is a binding site for GTP; it reads DIRV.

This sequence belongs to the RapZ-like family.

Functionally, displays ATPase and GTPase activities. The polypeptide is Nucleotide-binding protein THEYE_A0235 (Thermodesulfovibrio yellowstonii (strain ATCC 51303 / DSM 11347 / YP87)).